A 160-amino-acid chain; its full sequence is Putative 4-hydroxy-4-methyl-2-oxoglutarate aldolase (160 aa).

Residues 75-78 (GDQL) and R97 contribute to the substrate site. An a divalent metal cation-binding site is contributed by D98.

The protein belongs to the class II aldolase/RraA-like family. Homotrimer. The cofactor is a divalent metal cation.

The catalysed reaction is 4-hydroxy-4-methyl-2-oxoglutarate = 2 pyruvate. It catalyses the reaction oxaloacetate + H(+) = pyruvate + CO2. Its function is as follows. Catalyzes the aldol cleavage of 4-hydroxy-4-methyl-2-oxoglutarate (HMG) into 2 molecules of pyruvate. Also contains a secondary oxaloacetate (OAA) decarboxylase activity due to the common pyruvate enolate transition state formed following C-C bond cleavage in the retro-aldol and decarboxylation reactions. This chain is Putative 4-hydroxy-4-methyl-2-oxoglutarate aldolase, found in Vibrio vulnificus (strain YJ016).